The chain runs to 255 residues: Taurine import ATP-binding protein TauB (255 aa).

The ABC transporter domain maps to 2–229; that stretch reads LQISHLYADY…RFVAGESSRS (228 aa). 34–41 lines the ATP pocket; the sequence is GPSGCGKT.

This sequence belongs to the ABC transporter superfamily. Taurine importer (TC 3.A.1.17.1) family. The complex is composed of two ATP-binding proteins (TauB), two transmembrane proteins (TauC) and a solute-binding protein (TauA).

Its subcellular location is the cell inner membrane. The enzyme catalyses taurine(out) + ATP + H2O = taurine(in) + ADP + phosphate + H(+). Functionally, part of the ABC transporter complex TauABC involved in taurine import. Responsible for energy coupling to the transport system. This Escherichia coli O6:H1 (strain CFT073 / ATCC 700928 / UPEC) protein is Taurine import ATP-binding protein TauB.